Reading from the N-terminus, the 576-residue chain is Polyphenol oxidase 3 (576 aa).

The Cu cation site is built by His61, His85, His94, His259, His263, and His296. The 2'-(S-cysteinyl)-histidine (Cys-His) cross-link spans Cys83–His85. His263 contributes to the substrate binding site. A propeptide spans Phe393–Asn576 (removed in mature form).

This sequence belongs to the tyrosinase family. In terms of assembly, tetramer composed of two subunits of PPO3 (H subunits) and two subunits of the as yet uncharacterized product of ORF239342 (L subunits). It depends on Cu(2+) as a cofactor. In terms of processing, the C-ter is probably cleaved after Gly-392 since the mature active protein is smaller than the protein encoded by the gene.

The enzyme catalyses 2 L-dopa + O2 = 2 L-dopaquinone + 2 H2O. The catalysed reaction is L-tyrosine + O2 = L-dopaquinone + H2O. Copper-containing oxidase that catalyzes both the o-hydroxylation of monophenols and the subsequent oxidation of the resulting o-diphenols into reactive o-quinones, which evolve spontaneously to produce intermediates, which associate in dark brown pigments. Involved in the initial step of melanin synthesis. Melanins constitute a mechanism of defense and resistance to stress such as UV radiations, free radicals, gamma rays, dehydratation and extreme temperatures, and contribute to the fungal cell-wall resistance against hydrolytic enzymes in avoiding cellular lysis. Fungal pigments are also involved in the formation and stability of spores. The polypeptide is Polyphenol oxidase 3 (PPO3) (Agaricus bisporus (White button mushroom)).